A 183-amino-acid polypeptide reads, in one-letter code: Hypoxanthine/guanine phosphoribosyltransferase (183 aa).

The protein belongs to the purine/pyrimidine phosphoribosyltransferase family. Archaeal HPRT subfamily. As to quaternary structure, homodimer.

Its subcellular location is the cytoplasm. The enzyme catalyses IMP + diphosphate = hypoxanthine + 5-phospho-alpha-D-ribose 1-diphosphate. It carries out the reaction GMP + diphosphate = guanine + 5-phospho-alpha-D-ribose 1-diphosphate. It participates in purine metabolism; IMP biosynthesis via salvage pathway; IMP from hypoxanthine: step 1/1. Functionally, catalyzes a salvage reaction resulting in the formation of IMP that is energically less costly than de novo synthesis. This Methanocaldococcus vulcanius (strain ATCC 700851 / DSM 12094 / M7) (Methanococcus vulcanius) protein is Hypoxanthine/guanine phosphoribosyltransferase.